Reading from the N-terminus, the 319-residue chain is Ubiquinone biosynthesis protein COQ9, mitochondrial (319 aa).

The N-terminal 45 residues, 1–45 (MAATVAFSGVLRRAGWRLLQLRCLPVPRCRPALAPRAFRASAMQL), are a transit peptide targeting the mitochondrion. The SIFI-degron signature appears at 17–32 (RLLQLRCLPVPRCRPA). Positions 46–99 (RSLDQQKDQPPPSSSQQQSEAQGAEEPNPEALRSPPRYTDQGGEEEEDYESEEQ) are disordered. The segment covering 87 to 98 (GGEEEEDYESEE) has biased composition (acidic residues). The residue at position 176 (K176) is an N6-acetyllysine. R245 lines the a 1,2-diacylglycero-3-phosphoethanolamine pocket.

This sequence belongs to the COQ9 family. Homodimer. Heterodimer; two heterodimers of COQ7:COQ9 come together on the same side of the lipid pseudo-bilayer and form a curved tetramer with a hydrophobic surface suitable for membrane interaction. These two tetramers assemble into a soluble octamer with a pseudo-bilayer of lipids captured within. Interacts with COQ7; this interaction allows ubiquinone (CoQ) isoprene intermediates presentation to COQ7 and facilitates the COQ7-mediated hydroxylase step. Post-translationally, in response to mitochondrial stress, the precursor protein is ubiquitinated by the SIFI complex in the cytoplasm before mitochondrial import, leading to its degradation. Within the SIFI complex, UBR4 initiates ubiquitin chain that are further elongated or branched by KCMF1.

It localises to the mitochondrion. The protein operates within cofactor biosynthesis; ubiquinone biosynthesis. Functionally, membrane-associated protein that warps the membrane surface to access and bind aromatic isoprenes with high specificity, including ubiquinone (CoQ) isoprene intermediates and presents them directly to COQ7, therefore facilitating the COQ7-mediated hydroxylase step. Participates in the biosynthesis of coenzyme Q, also named ubiquinone, an essential lipid-soluble electron transporter for aerobic cellular respiration. The polypeptide is Ubiquinone biosynthesis protein COQ9, mitochondrial (Bos taurus (Bovine)).